A 131-amino-acid polypeptide reads, in one-letter code: Conotoxin Cal8.2 (131 aa).

Residues 1 to 19 (MKLLLTLLLGSALMCITLA) form the signal peptide. A propeptide spanning residues 20 to 38 (DECGLGTHRPVKEVIDNVR) is cleaved from the precursor.

In terms of processing, contains 4 disulfide bonds. In terms of tissue distribution, expressed by the venom duct.

The protein localises to the secreted. In terms of biological role, probable neurotoxin with unknown target. Possibly targets ion channels. The sequence is that of Conotoxin Cal8.2 from Californiconus californicus (California cone).